A 462-amino-acid chain; its full sequence is 3-isopropylmalate dehydratase large subunit (462 aa).

[4Fe-4S] cluster contacts are provided by cysteine 337, cysteine 397, and cysteine 400.

This sequence belongs to the aconitase/IPM isomerase family. LeuC type 1 subfamily. In terms of assembly, heterodimer of LeuC and LeuD. It depends on [4Fe-4S] cluster as a cofactor.

It catalyses the reaction (2R,3S)-3-isopropylmalate = (2S)-2-isopropylmalate. Its pathway is amino-acid biosynthesis; L-leucine biosynthesis; L-leucine from 3-methyl-2-oxobutanoate: step 2/4. In terms of biological role, catalyzes the isomerization between 2-isopropylmalate and 3-isopropylmalate, via the formation of 2-isopropylmaleate. The chain is 3-isopropylmalate dehydratase large subunit from Listeria monocytogenes serotype 4b (strain CLIP80459).